The following is a 162-amino-acid chain: Ribosome-binding factor A (162 aa).

Positions alanine 124–tyrosine 162 are disordered.

It belongs to the RbfA family. In terms of assembly, monomer. Binds 30S ribosomal subunits, but not 50S ribosomal subunits or 70S ribosomes.

It is found in the cytoplasm. In terms of biological role, one of several proteins that assist in the late maturation steps of the functional core of the 30S ribosomal subunit. Associates with free 30S ribosomal subunits (but not with 30S subunits that are part of 70S ribosomes or polysomes). Required for efficient processing of 16S rRNA. May interact with the 5'-terminal helix region of 16S rRNA. This chain is Ribosome-binding factor A, found in Mycolicibacterium paratuberculosis (strain ATCC BAA-968 / K-10) (Mycobacterium paratuberculosis).